The primary structure comprises 448 residues: 5-hydroxytryptamine receptor 7 (448 aa).

Topologically, residues 1 to 86 are extracellular; it reads MMDVNSSGRP…INYGRVEKVV (86 aa). N-linked (GlcNAc...) asparagine glycosylation is found at Asn5 and Asn69. A helical transmembrane segment spans residues 87–111; that stretch reads IGSILTLITLLTIAGNCLVVISVCF. Residues 112–121 lie on the Cytoplasmic side of the membrane; that stretch reads VKKLRQPSNY. A helical transmembrane segment spans residues 122-143; sequence LIVSLALADLSVAVAVMPFVSV. Residues 144–155 are Extracellular-facing; that stretch reads TDLIGGKWIFGH. Residues 156–181 form a helical membrane-spanning segment; the sequence is FFCNVFIAMDVMCCTASIMTLCVISI. Cys158 and Cys234 are joined by a disulfide. Asp165 contacts serotonin. The Cytoplasmic segment spans residues 182 to 201; that stretch reads DRYLGITRPLTYPVRQNGKC. The chain crosses the membrane as a helical span at residues 202 to 222; sequence MAKMILSVWLLSASITLPPLF. The Extracellular segment spans residues 223-240; that stretch reads GWAQNVNDDKVCLISQDF. The helical transmembrane segment at 241-263 threads the bilayer; sequence GYTIYSTAVAFYIPMSVMLFMYY. The Cytoplasmic segment spans residues 264–329; the sequence is QIYKAARKSA…SIFKREQKAA (66 aa). A helical membrane pass occupies residues 330 to 355; sequence TTLGIIVGAFTVCWLPFFLLSTARPF. The Extracellular segment spans residues 356-366; that stretch reads ICGTSCSCIPL. A helical membrane pass occupies residues 367-390; it reads WVERTCLWLGYANSLINPFIYAFF. Residues 391-448 lie on the Cytoplasmic side of the membrane; the sequence is NRDLRTTYRSLLQCQYRNINRKLSAAGMHEALKLAERPERSEFVLQNCDHCGKKGHDT. Cys404 carries the S-palmitoyl cysteine lipid modification.

Belongs to the G-protein coupled receptor 1 family.

It is found in the cell membrane. G-protein coupled receptor for 5-hydroxytryptamine (serotonin), a biogenic hormone that functions as a neurotransmitter, a hormone and a mitogen. Ligand binding causes a conformation change that triggers signaling via guanine nucleotide-binding proteins (G proteins) and modulates the activity of downstream effectors. HTR7 is coupled to G(s) G alpha proteins and mediates activation of adenylate cyclase activity. The protein is 5-hydroxytryptamine receptor 7 (Htr7) of Mus musculus (Mouse).